The sequence spans 138 residues: Cysteine desulfuration protein SufE (138 aa).

The Cysteine persulfide intermediate role is filled by Cys-51.

Belongs to the SufE family. As to quaternary structure, homodimer. Interacts with SufS.

The protein localises to the cytoplasm. Its pathway is cofactor biosynthesis; iron-sulfur cluster biosynthesis. Its function is as follows. Participates in cysteine desulfuration mediated by SufS. Cysteine desulfuration mobilizes sulfur from L-cysteine to yield L-alanine and constitutes an essential step in sulfur metabolism for biosynthesis of a variety of sulfur-containing biomolecules. Functions as a sulfur acceptor for SufS, by mediating the direct transfer of the sulfur atom from the S-sulfanylcysteine of SufS, an intermediate product of cysteine desulfuration process. The polypeptide is Cysteine desulfuration protein SufE (Escherichia coli O8 (strain IAI1)).